A 153-amino-acid polypeptide reads, in one-letter code: Transcriptional repressor NrdR (153 aa).

Residues 3-34 (CPFCNHLHDKVVDSRESKEGDAIRRRRECLEC) fold into a zinc finger. The 91-residue stretch at 49–139 (YMVVKKDGRR…VYRDFQDEQA (91 aa)) folds into the ATP-cone domain.

This sequence belongs to the NrdR family. Requires Zn(2+) as cofactor.

Negatively regulates transcription of bacterial ribonucleotide reductase nrd genes and operons by binding to NrdR-boxes. The sequence is that of Transcriptional repressor NrdR from Solibacter usitatus (strain Ellin6076).